The sequence spans 150 residues: FAD synthase (150 aa).

Residues 11–12 (TF), 16–19 (HPGH), D96, and Y124 contribute to the ATP site.

The protein belongs to the archaeal FAD synthase family. In terms of assembly, homodimer. The cofactor is a divalent metal cation.

It carries out the reaction FMN + ATP + H(+) = FAD + diphosphate. The protein operates within cofactor biosynthesis; FAD biosynthesis; FAD from FMN: step 1/1. Functionally, catalyzes the transfer of the AMP portion of ATP to flavin mononucleotide (FMN) to produce flavin adenine dinucleotide (FAD) coenzyme. The chain is FAD synthase from Methanocaldococcus fervens (strain DSM 4213 / JCM 15782 / AG86) (Methanococcus fervens).